Consider the following 102-residue polypeptide: uncharacterized protein (102 aa).

The N-terminal stretch at 1–19 (MFLFCFVLFCSLVFPLARG) is a signal peptide.

This is an uncharacterized protein from Saccharomyces cerevisiae (strain ATCC 204508 / S288c) (Baker's yeast).